A 218-amino-acid chain; its full sequence is Ribonuclease T (218 aa).

The Exonuclease domain occupies 22-196 (VVVDVETAGF…YDAMKTAELF (175 aa)). The Mg(2+) site is built by Asp25, Glu27, His183, and Asp188. His183 acts as the Proton donor/acceptor in catalysis.

It belongs to the RNase T family. Homodimer. The cofactor is Mg(2+).

Its function is as follows. Trims short 3' overhangs of a variety of RNA species, leaving a one or two nucleotide 3' overhang. Responsible for the end-turnover of tRNA: specifically removes the terminal AMP residue from uncharged tRNA (tRNA-C-C-A). Also appears to be involved in tRNA biosynthesis. This is Ribonuclease T from Hahella chejuensis (strain KCTC 2396).